Reading from the N-terminus, the 116-residue chain is Large ribosomal subunit protein eL31 (116 aa).

Belongs to the eukaryotic ribosomal protein eL31 family.

In Chlamydomonas reinhardtii (Chlamydomonas smithii), this protein is Large ribosomal subunit protein eL31 (RPL31).